The chain runs to 318 residues: Transaldolase (318 aa).

Catalysis depends on Lys131, which acts as the Schiff-base intermediate with substrate.

Belongs to the transaldolase family. Type 1 subfamily. Homodimer.

Its subcellular location is the cytoplasm. It catalyses the reaction D-sedoheptulose 7-phosphate + D-glyceraldehyde 3-phosphate = D-erythrose 4-phosphate + beta-D-fructose 6-phosphate. Its pathway is carbohydrate degradation; pentose phosphate pathway; D-glyceraldehyde 3-phosphate and beta-D-fructose 6-phosphate from D-ribose 5-phosphate and D-xylulose 5-phosphate (non-oxidative stage): step 2/3. Functionally, transaldolase is important for the balance of metabolites in the pentose-phosphate pathway. The polypeptide is Transaldolase (Buchnera aphidicola subsp. Cinara cedri (strain Cc)).